The sequence spans 132 residues: Small ribosomal subunit protein uS8c (132 aa).

This sequence belongs to the universal ribosomal protein uS8 family. As to quaternary structure, part of the 30S ribosomal subunit.

Its subcellular location is the plastid. The protein localises to the chloroplast. Its function is as follows. One of the primary rRNA binding proteins, it binds directly to 16S rRNA central domain where it helps coordinate assembly of the platform of the 30S subunit. This Physcomitrium patens (Spreading-leaved earth moss) protein is Small ribosomal subunit protein uS8c (rps8).